Reading from the N-terminus, the 101-residue chain is DNA-binding protein Fis (101 aa).

A DNA-binding region (H-T-H motif) is located at residues 77–96 (QTRAANMLGINRGTLRKKLK).

It belongs to the transcriptional regulatory Fis family. Homodimer.

Functionally, activates ribosomal RNA transcription. Plays a direct role in upstream activation of rRNA promoters. The polypeptide is DNA-binding protein Fis (Shewanella frigidimarina (strain NCIMB 400)).